We begin with the raw amino-acid sequence, 348 residues long: Phosphate acyltransferase (348 aa).

It belongs to the PlsX family. Homodimer. Probably interacts with PlsY.

The protein localises to the cytoplasm. It carries out the reaction a fatty acyl-[ACP] + phosphate = an acyl phosphate + holo-[ACP]. It participates in lipid metabolism; phospholipid metabolism. Its function is as follows. Catalyzes the reversible formation of acyl-phosphate (acyl-PO(4)) from acyl-[acyl-carrier-protein] (acyl-ACP). This enzyme utilizes acyl-ACP as fatty acyl donor, but not acyl-CoA. The polypeptide is Phosphate acyltransferase (Francisella tularensis subsp. tularensis (strain FSC 198)).